The following is a 339-amino-acid chain: MPLPPSTLNQKSNRVYSVARVYKNACEERPQEYWDYEQGVTIDWGKISNYEIINKIGRGKYSEVFSGRCIVNNQKCVIKVLKPVKMKKIYRELKILTNLTGGPNVVGLYDIVQDADSKIPALIFEEIKNVDFRTLYPTFKLPDIQYYFTQLLIALDYCHSMGIMHRDVKPQNVMIDPTERKLRLIDWGLAEFYHPGVDYNVRVASRYHKGPELLVNLNQYDYSLDLWSVGCMLAAIVFKKEPFFKGSSNPDQLVKIATVLGTKELLGYLGKYGLHLPSEYDNIMRDFTKKSWTHFITSETKLAVPEVVDLIDNLLRYDHQERLTAKEAMDHKFFKTKFE.

The 285-residue stretch at 50 to 334 folds into the Protein kinase domain; it reads YEIINKIGRG…AKEAMDHKFF (285 aa). ATP-binding positions include 56 to 64 and Lys79; that span reads IGRGKYSEV. The active-site Proton acceptor is the Asp167.

The protein belongs to the protein kinase superfamily. Ser/Thr protein kinase family. CK2 subfamily. As to quaternary structure, tetramer composed of an alpha chain, an alpha', one beta chain and one beta' chain. Interacts with FACT subunits POB3 and SPT16. Interacts with NAP1. Interacts with YTA7.

The catalysed reaction is L-seryl-[protein] + ATP = O-phospho-L-seryl-[protein] + ADP + H(+). It carries out the reaction L-threonyl-[protein] + ATP = O-phospho-L-threonyl-[protein] + ADP + H(+). In terms of biological role, catalytic subunit of a constitutively active serine/threonine-protein kinase complex that phosphorylates a large number of substrates containing acidic residues C-terminal to the phosphorylated serine or threonine. Phosphorylates YTA7 during S-phase to promote transcription of histones. The sequence is that of Casein kinase II subunit alpha' from Saccharomyces cerevisiae (strain ATCC 204508 / S288c) (Baker's yeast).